The sequence spans 304 residues: Dihydroorotate dehydrogenase B (NAD(+)), catalytic subunit (304 aa).

FMN contacts are provided by residues serine 21 and 45–46; that span reads KA. Substrate contacts are provided by residues lysine 45 and 69 to 73; that span reads NAIGL. FMN-binding residues include asparagine 99 and asparagine 127. Residue asparagine 127 participates in substrate binding. The active-site Nucleophile is the cysteine 130. FMN is bound by residues lysine 165 and isoleucine 191. 192–193 contacts substrate; it reads NT. FMN-binding positions include glycine 217, 243 to 244, and 265 to 266; these read GG and GT.

It belongs to the dihydroorotate dehydrogenase family. Type 1 subfamily. In terms of assembly, heterotetramer of 2 PyrK and 2 PyrD type B subunits. Requires FMN as cofactor.

It is found in the cytoplasm. The enzyme catalyses (S)-dihydroorotate + NAD(+) = orotate + NADH + H(+). It functions in the pathway pyrimidine metabolism; UMP biosynthesis via de novo pathway; orotate from (S)-dihydroorotate (NAD(+) route): step 1/1. Catalyzes the conversion of dihydroorotate to orotate with NAD(+) as electron acceptor. In Listeria welshimeri serovar 6b (strain ATCC 35897 / DSM 20650 / CCUG 15529 / CIP 8149 / NCTC 11857 / SLCC 5334 / V8), this protein is Dihydroorotate dehydrogenase B (NAD(+)), catalytic subunit (pyrD).